The following is a 267-amino-acid chain: Imidazole glycerol phosphate synthase subunit HisF (267 aa).

Catalysis depends on residues Asp21 and Asp140.

Belongs to the HisA/HisF family. As to quaternary structure, heterodimer of HisH and HisF.

Its subcellular location is the cytoplasm. The catalysed reaction is 5-[(5-phospho-1-deoxy-D-ribulos-1-ylimino)methylamino]-1-(5-phospho-beta-D-ribosyl)imidazole-4-carboxamide + L-glutamine = D-erythro-1-(imidazol-4-yl)glycerol 3-phosphate + 5-amino-1-(5-phospho-beta-D-ribosyl)imidazole-4-carboxamide + L-glutamate + H(+). It functions in the pathway amino-acid biosynthesis; L-histidine biosynthesis; L-histidine from 5-phospho-alpha-D-ribose 1-diphosphate: step 5/9. Its function is as follows. IGPS catalyzes the conversion of PRFAR and glutamine to IGP, AICAR and glutamate. The HisF subunit catalyzes the cyclization activity that produces IGP and AICAR from PRFAR using the ammonia provided by the HisH subunit. This chain is Imidazole glycerol phosphate synthase subunit HisF, found in Bordetella avium (strain 197N).